The sequence spans 304 residues: Homoserine O-acetyltransferase (304 aa).

Cys142 acts as the Acyl-thioester intermediate in catalysis. Residues Lys163 and Ser191 each coordinate substrate. His234 functions as the Proton acceptor in the catalytic mechanism. The active site involves Glu236. Residue Arg248 coordinates substrate.

Belongs to the MetA family.

The protein resides in the cytoplasm. It carries out the reaction L-homoserine + acetyl-CoA = O-acetyl-L-homoserine + CoA. It functions in the pathway amino-acid biosynthesis; L-methionine biosynthesis via de novo pathway; O-acetyl-L-homoserine from L-homoserine: step 1/1. Its function is as follows. Transfers an acetyl group from acetyl-CoA to L-homoserine, forming acetyl-L-homoserine. In Thermotoga neapolitana (strain ATCC 49049 / DSM 4359 / NBRC 107923 / NS-E), this protein is Homoserine O-acetyltransferase.